A 113-amino-acid polypeptide reads, in one-letter code: Iron-sulfur cluster insertion protein ErpA (113 aa).

Positions 41, 105, and 107 each coordinate iron-sulfur cluster.

This sequence belongs to the HesB/IscA family. As to quaternary structure, homodimer. Iron-sulfur cluster is required as a cofactor.

Required for insertion of 4Fe-4S clusters for at least IspG. In Histophilus somni (strain 129Pt) (Haemophilus somnus), this protein is Iron-sulfur cluster insertion protein ErpA.